Consider the following 86-residue polypeptide: Exopolysaccharide production repressor protein (86 aa).

A helical membrane pass occupies residues F18–F38. Residues T44–P86 form a disordered region. Residues P61–E70 show a composition bias toward basic and acidic residues.

The protein localises to the cell membrane. It functions in the pathway glycan metabolism; exopolysaccharide biosynthesis. Inhibition of exopolysaccharide synthesis (EPS) and nodulation ability (NOD). This chain is Exopolysaccharide production repressor protein (exoX), found in Rhizobium leguminosarum bv. phaseoli.